Consider the following 38-residue polypeptide: Phospholipase A2 2 (38 aa).

Residues Tyr-28, Gly-30, and Gly-32 each coordinate Ca(2+).

The protein belongs to the phospholipase A2 family. Group I subfamily. It depends on Ca(2+) as a cofactor. As to expression, expressed by the venom gland.

It is found in the secreted. The enzyme catalyses a 1,2-diacyl-sn-glycero-3-phosphocholine + H2O = a 1-acyl-sn-glycero-3-phosphocholine + a fatty acid + H(+). In terms of biological role, snake venom phospholipase A2 (PLA2) that inhibits neuromuscular transmission by blocking acetylcholine release from the nerve termini. PLA2 catalyzes the calcium-dependent hydrolysis of the 2-acyl groups in 3-sn-phosphoglycerides. The chain is Phospholipase A2 2 from Calliophis bivirgatus (Blue Malaysian coral snake).